We begin with the raw amino-acid sequence, 193 residues long: Interferon type A3 (193 aa).

The signal sequence occupies residues 1-31 (MAVPASPQHPRGYGILLLTLLLKALATTASA). 3 cysteine pairs are disulfide-bonded: cysteine 32-cysteine 129, cysteine 61-cysteine 155, and cysteine 68-cysteine 168. Residues asparagine 65, asparagine 71, asparagine 108, and asparagine 186 are each glycosylated (N-linked (GlcNAc...) asparagine).

This sequence belongs to the alpha/beta interferon family.

It localises to the secreted. Functionally, has antiviral activities. This Gallus gallus (Chicken) protein is Interferon type A3 (IFNA3).